The following is a 301-amino-acid chain: D-alanine--D-alanine ligase (301 aa).

The ATP-grasp domain occupies 99-294 (KCILKAANIR…FPELIDMIID (196 aa)). 126 to 181 (IEKMGYPVVVKPTHGGSSVATFIIKEEKDIKDAVIEGFKWDSEVIIEKFIKGDEIT) contacts ATP. Residues aspartate 248, glutamate 261, and asparagine 263 each coordinate Mg(2+).

The protein belongs to the D-alanine--D-alanine ligase family. Mg(2+) is required as a cofactor. Mn(2+) serves as cofactor.

Its subcellular location is the cytoplasm. The enzyme catalyses 2 D-alanine + ATP = D-alanyl-D-alanine + ADP + phosphate + H(+). It participates in cell wall biogenesis; peptidoglycan biosynthesis. Its function is as follows. Cell wall formation. The chain is D-alanine--D-alanine ligase from Clostridium botulinum (strain Alaska E43 / Type E3).